The following is a 1149-amino-acid chain: MINRDNKKAITKKGMISNRLNKFSIRKYTVGTASILVGTTLIFGLGNQEAKAAENTSTENAKQDEASASDNKEVVSETENNSTQKNDLTNPIKKETNTDSHQEAKEAPTTSSTQQQQNNATTSTETKPQNIEKENVKPSTDKTATEDTSVILEEKKAPNNTNNDVTTKPSTSEIQTTPTTPQESTNIENSQPQPTPSKVDNQVTDAINPKEPVNVSKEELKNNPEKLKELVRNDSNTDRSTKPVATAPTSVAPKRVNAKIRFAVAQPAAVASNNVNDLITVTKQMITEGIKDDGVIQAHDGEHIIYTSDFKIDNAVKAGDTMTVKYDKHTIPSDITDDFTPVDITDPSGEVIAKGTFDLNTKTITYKFTDYVDRYENVNAKLELNSYIDKKEVPNETNLNLTFATADKETSKNVKVEYQKPIVKDESNIQSIFSHLDTTKHEVEQTIYVNPLKLNAKNTNVTIKSGGVADNGDYYTGDGSTIIDSNTEIKVYKVASGQQLPQSNKIYDYSQYEDVTNSVTINKNYGTNMANINFGDIDSAYIVKVVSKYTPGAEDDLAVQQGVRMTTTNKYNYSSYAGYTNTILSTTDSGGGDGTVKPEEKLYKIGDYVWEDVDKDGVQGTDSKEKPMANVLVTLTYPDGTTKSVRTDANGHYEFGGLKDGETYTVKFETPAGYLPTKENGTTDGEKDSNGSSVTVKINGKDDMSLDTGFYKEPKYNLGDYVWEDTNKDGIQDANEPGIKDVKVTLKDSTGKVIGTTTTDASGKYKFTDLDNGNYTVEFETPAGYTPTVKNTTAEDKDSNGLTTTGVIKDADNWTLDSGFYKTPKYSLGDYVWYDSNKDGKQDSTEKGIKDVTVTLQNEKGEVIGTTKTDENGKYRFDNLDSGKYKVIFEKPAGLTQTGTNTTEDDKDADGGEVDVTITDHDDFTLDNGYFEEDTSDSDSDSDSDSDSDSDSDSDSDSDSDSDSDSDSDSDSDSDSDSDSDSDSDSDSDSDSDSDSDSDSDSDSDSDSDSDSDSDSDSDSDSDSDSDSDSDSDSDSDSDSDSDSDSDSDSDSDSDSDSDSDSDSDSDSDSDSDSDSDSDSDSDSDSDSDAGKHTPVKPMSATKDHHNKAKALPETGSENNGSNNATLFGGLFAALGSLLLFGRRKKQNK.

Residues 1 to 52 form the signal peptide; that stretch reads MINRDNKKAITKKGMISNRLNKFSIRKYTVGTASILVGTTLIFGLGNQEAKA. The segment at 53-601 is ligand binding A region; sequence AENTSTENAK…GDGTVKPEEK (549 aa). Disordered stretches follow at residues 54 to 249 and 675 to 697; these read ENTS…TAPT and LPTK…VTVK. Positions 61 to 75 are enriched in basic and acidic residues; sequence AKQDEASASDNKEVV. Over residues 77–89 the composition is skewed to polar residues; sequence ETENNSTQKNDLT. Residues 92-106 are compositionally biased toward basic and acidic residues; that stretch reads IKKETNTDSHQEAKE. Low complexity predominate over residues 109-126; that stretch reads TTSSTQQQQNNATTSTET. The span at 130 to 145 shows a compositional bias: basic and acidic residues; that stretch reads NIEKENVKPSTDKTAT. The span at 158–205 shows a compositional bias: polar residues; the sequence is PNNTNNDVTTKPSTSEIQTTPTTPQESTNIENSQPQPTPSKVDNQVTD. Residues 216-241 show a composition bias toward basic and acidic residues; sequence SKEELKNNPEKLKELVRNDSNTDRST. 3 consecutive CNA-B domains span residues 602–714, 715–824, and 825–935; these read LYKI…YKEP, KYNL…YKTP, and KYSL…EEDT. A disordered region spans residues 896-1124; the sequence is TQTGTNTTED…TGSENNGSNN (229 aa). 2 stretches are compositionally biased toward acidic residues: residues 903-913 and 930-1088; these read TEDDKDADGGE and YFEE…DSDS. The LPXTG sorting signal signature appears at 1112-1116; sequence LPETG. Threonine 1115 carries the pentaglycyl murein peptidoglycan amidated threonine modification. The propeptide at 1116–1149 is removed by sortase; it reads GSENNGSNNATLFGGLFAALGSLLLFGRRKKQNK.

It belongs to the serine-aspartate repeat-containing protein (SDr) family.

The protein localises to the secreted. It is found in the cell wall. Its function is as follows. Specifically interacts with bone sialoprotein (BSP), a glycoprotein of bone and dentin extracellular matrix. Could contribute to staphylococcal osteomyelitis and arthritis. In Staphylococcus aureus, this protein is Bone sialoprotein-binding protein (bbp).